The chain runs to 101 residues: Small ribosomal subunit protein uS10 (101 aa).

This sequence belongs to the universal ribosomal protein uS10 family. Part of the 30S ribosomal subunit.

Its function is as follows. Involved in the binding of tRNA to the ribosomes. In Mycobacterium leprae (strain Br4923), this protein is Small ribosomal subunit protein uS10.